A 444-amino-acid chain; its full sequence is 23S rRNA (uracil(1939)-C(5))-methyltransferase RlmD (444 aa).

Positions 5 to 64 constitute a TRAM domain; it reads KPKLNLTSQTARIVNLSHDGRGIARINGKATFIQGALPGEVVEFQYTRVKKDFDEGKLLS. Residues cysteine 77, cysteine 83, cysteine 86, and cysteine 166 each coordinate [4Fe-4S] cluster. Glutamine 276, phenylalanine 305, asparagine 310, glutamate 326, asparagine 353, and aspartate 374 together coordinate S-adenosyl-L-methionine. Cysteine 400 (nucleophile) is an active-site residue.

This sequence belongs to the class I-like SAM-binding methyltransferase superfamily. RNA M5U methyltransferase family. RlmD subfamily.

It carries out the reaction uridine(1939) in 23S rRNA + S-adenosyl-L-methionine = 5-methyluridine(1939) in 23S rRNA + S-adenosyl-L-homocysteine + H(+). In terms of biological role, catalyzes the formation of 5-methyl-uridine at position 1939 (m5U1939) in 23S rRNA. The polypeptide is 23S rRNA (uracil(1939)-C(5))-methyltransferase RlmD (Legionella pneumophila (strain Lens)).